Reading from the N-terminus, the 508-residue chain is Probable G-protein coupled receptor 101 (508 aa).

Residues 1 to 35 lie on the Extracellular side of the membrane; that stretch reads MTSTCTNSTRESNSSHTCMPLSKMPISLAHGIIRS. Residues asparagine 7 and asparagine 13 are each glycosylated (N-linked (GlcNAc...) asparagine). Residues 36–56 traverse the membrane as a helical segment; it reads TVLVIFLAASFVGNIVLALVL. The Cytoplasmic portion of the chain corresponds to 57–68; it reads QRKPQLLQVTNR. A helical membrane pass occupies residues 69 to 89; sequence FIFNLLVTDLLQISLVAPWVV. Residues 90-106 are Extracellular-facing; sequence ATSVPLFWPLNSHFCTA. A disulfide bridge links cysteine 104 with cysteine 182. A helical membrane pass occupies residues 107 to 127; sequence LVSLTHLFAFASVNTIVVVSV. Over 128–149 the chain is Cytoplasmic; that stretch reads DRYLSIIHPLSYPSKMTQRRGY. The helical transmembrane segment at 150-170 threads the bilayer; the sequence is LLLYGTWIVAILQSTPPLYGW. The Extracellular portion of the chain corresponds to 171–196; it reads GQAAFDERNALCSMIWGASPSYTILS. The helical transmembrane segment at 197-217 threads the bilayer; the sequence is VVSFIVIPLIVMIACYSVVFC. The Cytoplasmic segment spans residues 218–399; it reads AARRQHALLY…PRCYQCKAAK (182 aa). The segment at 244 to 338 is disordered; that stretch reads NEDEEGAEKK…ENSMKADKGR (95 aa). Basic and acidic residues-rich tracts occupy residues 250–288 and 318–338; these read AEKK…KAKE and MEGK…DKGR. Residues 400-420 form a helical membrane-spanning segment; sequence VIFIIIFSYVLSLGPYCFLAV. Residues 421–433 lie on the Extracellular side of the membrane; that stretch reads LAVWVDVETQVPQ. The chain crosses the membrane as a helical span at residues 434–454; that stretch reads WVITIIIWLFFLQCCIHPYVY. Residues 455–508 are Cytoplasmic-facing; it reads GYMHKTIKKEIQDMLKKFFCKEKPPKEDSHPDLPGTEGGTEGKIVPSYDSATFP. The span at 476 to 485 shows a compositional bias: basic and acidic residues; sequence EKPPKEDSHP. Residues 476–508 are disordered; it reads EKPPKEDSHPDLPGTEGGTEGKIVPSYDSATFP.

It belongs to the G-protein coupled receptor 1 family.

It is found in the cell membrane. Functionally, orphan receptor. This chain is Probable G-protein coupled receptor 101 (GPR101), found in Homo sapiens (Human).